The following is a 141-amino-acid chain: Hemoglobin subunit alpha-1 (141 aa).

Residues 1–141 (VLTDEDKARV…LSKDLVSKYR (141 aa)) form the Globin domain. Histidine 58 lines the O2 pocket. Histidine 87 contributes to the heme b binding site.

It belongs to the globin family. In terms of assembly, heterotetramer of two alpha chains and two beta chains. As to expression, red blood cells.

Involved in oxygen transport from the lung to the various peripheral tissues. The chain is Hemoglobin subunit alpha-1 from Naja naja (Indian cobra).